Here is a 137-residue protein sequence, read N- to C-terminus: MATITASSSASLVARASLVHNSRVGVSSSPILGLPSMTKRSKVTCSIENKPSTTETTTTTNKSMGASLLAAAAAATISNPAMALVDERMSTEGTGLPFGLSNNLLGWILFGVFGLIWALYFVYASGLEEDEESGLSL.

The N-terminal 64 residues, 1–64, are a transit peptide targeting the chloroplast; that stretch reads MATITASSSA…ETTTTTNKSM (64 aa). Residues 65–83 constitute a thylakoid transit peptide; sequence GASLLAAAAAATISNPAMA. Residues 84-103 are Lumenal, thylakoid-facing; the sequence is LVDERMSTEGTGLPFGLSNN. The helical transmembrane segment at 104–123 threads the bilayer; sequence LLGWILFGVFGLIWALYFVY. Over 124 to 137 the chain is Stromal; it reads ASGLEEDEESGLSL.

In terms of assembly, part of the photosystem II complex. PSII is composed of 1 copy each of membrane proteins PsbA, PsbB, PsbC, PsbD, numerous small proteins, at least 3 peripheral proteins of the oxygen-evolving complex and a large number of cofactors. It forms dimeric complexes.

Its subcellular location is the plastid. It localises to the chloroplast thylakoid membrane. Stabilizes dimeric photosystem II (PSII). In its absence no dimeric PSII accumulates and there is a reduction of monomeric PSII. The sequence is that of Photosystem II reaction center W protein, chloroplastic from Spinacia oleracea (Spinach).